Reading from the N-terminus, the 485-residue chain is Protein DETOXIFICATION 14 (485 aa).

The next 12 helical transmembrane spans lie at 30–50 (LSYIAGPMIAVNSSMYVLQVI), 68–88 (IAVSFCSVTGFSVVFGLASAL), 112–132 (IVSLFLVCIPLSLLWTYIGDI), 147–167 (GKFATWLIPALFGYATLQPLV), 175–195 (LILPLVMSSVSSLCIHIVLCW), 207–227 (GAAIAIGVSYWLNVTVLGLYM), 259–279 (ASMICLEWWSFEFLVLLSGIL), 288–308 (VLSVCLSTQSSLYQIPESLGA), 329–349 (AVYTAMVITGVESIMVGAIVF), 372–392 (MAPLLSLSVIFDALHAALSGV), 405–425 (VNLAAYYLFGIPTAILLAFGF), and 432–452 (LWIGITVGSCVQAVLLGLIVI).

It belongs to the multi antimicrobial extrusion (MATE) (TC 2.A.66.1) family.

Its subcellular location is the membrane. The sequence is that of Protein DETOXIFICATION 14 from Arabidopsis thaliana (Mouse-ear cress).